The primary structure comprises 355 residues: DNA polymerase IV (355 aa).

One can recognise a UmuC domain in the interval 7–188 (IIHIDMDCFY…LPVRKLFGVG (182 aa)). Mg(2+) contacts are provided by aspartate 11 and aspartate 106. Residue glutamate 107 is part of the active site.

It belongs to the DNA polymerase type-Y family. In terms of assembly, monomer. It depends on Mg(2+) as a cofactor.

The protein resides in the cytoplasm. The enzyme catalyses DNA(n) + a 2'-deoxyribonucleoside 5'-triphosphate = DNA(n+1) + diphosphate. In terms of biological role, poorly processive, error-prone DNA polymerase involved in untargeted mutagenesis. Copies undamaged DNA at stalled replication forks, which arise in vivo from mismatched or misaligned primer ends. These misaligned primers can be extended by PolIV. Exhibits no 3'-5' exonuclease (proofreading) activity. May be involved in translesional synthesis, in conjunction with the beta clamp from PolIII. This chain is DNA polymerase IV, found in Legionella pneumophila (strain Corby).